The sequence spans 791 residues: Nuclear cap-binding protein subunit 1-A (791 aa).

Residues 1 to 24 (MSRRRHSDENDGGQAHKRRKTSEP) are disordered. One can recognise an MIF4G domain in the interval 28 to 240 (EDRLESLICR…CLWAQIQKLK (213 aa)). Positions 641–714 (LHSTIRKMNK…SEQKNLFLVI (74 aa)) form a coiled coil. The disordered stretch occupies residues 664-687 (QRLAKQHKHRDSDDNDEDSGRKDG).

It belongs to the NCBP1 family. As to quaternary structure, component of the nuclear cap-binding complex (CBC), a heterodimer composed of ncbp1/cbp80 and ncbp2/cbp20 that interacts with m7GpppG-capped RNA. Component of an alternative nuclear cap-binding complex (CBC) composed of ncbp1/cbp80 and ncbp3.

It localises to the nucleus. The protein resides in the cytoplasm. Functionally, component of the cap-binding complex (CBC), which binds cotranscriptionally to the 5'-cap of pre-mRNAs and is involved in various processes such as pre-mRNA splicing, translation regulation, nonsense-mediated mRNA decay, RNA-mediated gene silencing (RNAi) by microRNAs (miRNAs) and mRNA export. The CBC complex is involved in mRNA export from the nucleus, leading to the recruitment of the mRNA export machinery to the 5'-end of mRNA and to mRNA export in a 5' to 3' direction through the nuclear pore. The CBC complex is also involved in mediating U snRNA and intronless mRNAs export from the nucleus. The CBC complex is essential for a pioneer round of mRNA translation, before steady state translation when the CBC complex is replaced by cytoplasmic cap-binding protein eIF4E. The pioneer round of mRNA translation mediated by the CBC complex plays a central role in nonsense-mediated mRNA decay (NMD), NMD only taking place in mRNAs bound to the CBC complex, but not on eIF4E-bound mRNAs. The CBC complex enhances NMD in mRNAs containing at least one exon-junction complex (EJC), promoting the interaction between UPF1 and UPF2. The CBC complex is also involved in 'failsafe' NMD, which is independent of the EJC complex, while it does not participate in Staufen-mediated mRNA decay (SMD). During cell proliferation, the CBC complex is also involved in microRNAs (miRNAs) biogenesis via its interaction with SRRT/ARS2 and is required for miRNA-mediated RNA interference. The CBC complex also acts as a negative regulator of parn, thereby acting as an inhibitor of mRNA deadenylation. In the CBC complex, NCBP1/CBP80 does not bind directly capped RNAs (m7GpppG-capped RNA) but is required to stabilize the movement of the N-terminal loop of NCBP2/CBP20 and lock the CBC into a high affinity cap-binding state with the cap structure. Associates with NCBP3 to form an alternative cap-binding complex (CBC) which plays a key role in mRNA export. The conventional CBC with NCBP2 binds both small nuclear RNA (snRNA) and messenger (mRNA) and is involved in their export from the nucleus whereas the alternative CBC with NCBP3 does not bind snRNA and associates only with mRNA thereby playing a role only in mRNA export. This Xenopus laevis (African clawed frog) protein is Nuclear cap-binding protein subunit 1-A (ncbp1-a).